The chain runs to 485 residues: Protein DETOXIFICATION 14 (485 aa).

12 consecutive transmembrane segments (helical) span residues leucine 30–isoleucine 50, isoleucine 68–leucine 88, isoleucine 112–isoleucine 132, glycine 147–valine 167, leucine 175–tryptophan 195, glycine 207–methionine 227, alanine 259–leucine 279, valine 288–alanine 308, alanine 329–phenylalanine 349, methionine 372–valine 392, valine 405–phenylalanine 425, and leucine 432–isoleucine 452.

The protein belongs to the multi antimicrobial extrusion (MATE) (TC 2.A.66.1) family.

It localises to the membrane. This Arabidopsis thaliana (Mouse-ear cress) protein is Protein DETOXIFICATION 14.